Reading from the N-terminus, the 301-residue chain is Methionyl-tRNA formyltransferase (301 aa).

Position 109–112 (109–112 (SLLP)) interacts with (6S)-5,6,7,8-tetrahydrofolate.

This sequence belongs to the Fmt family.

It catalyses the reaction L-methionyl-tRNA(fMet) + (6R)-10-formyltetrahydrofolate = N-formyl-L-methionyl-tRNA(fMet) + (6S)-5,6,7,8-tetrahydrofolate + H(+). Functionally, attaches a formyl group to the free amino group of methionyl-tRNA(fMet). The formyl group appears to play a dual role in the initiator identity of N-formylmethionyl-tRNA by promoting its recognition by IF2 and preventing the misappropriation of this tRNA by the elongation apparatus. This Ruegeria pomeroyi (strain ATCC 700808 / DSM 15171 / DSS-3) (Silicibacter pomeroyi) protein is Methionyl-tRNA formyltransferase.